The primary structure comprises 98 residues: Aspartyl/glutamyl-tRNA(Asn/Gln) amidotransferase subunit C (98 aa).

A disordered region spans residues 70 to 98 (PSLTPEQALSGAPAQEQQRFKVPQILGED).

The protein belongs to the GatC family. Heterotrimer of A, B and C subunits.

The enzyme catalyses L-glutamyl-tRNA(Gln) + L-glutamine + ATP + H2O = L-glutaminyl-tRNA(Gln) + L-glutamate + ADP + phosphate + H(+). It catalyses the reaction L-aspartyl-tRNA(Asn) + L-glutamine + ATP + H2O = L-asparaginyl-tRNA(Asn) + L-glutamate + ADP + phosphate + 2 H(+). Functionally, allows the formation of correctly charged Asn-tRNA(Asn) or Gln-tRNA(Gln) through the transamidation of misacylated Asp-tRNA(Asn) or Glu-tRNA(Gln) in organisms which lack either or both of asparaginyl-tRNA or glutaminyl-tRNA synthetases. The reaction takes place in the presence of glutamine and ATP through an activated phospho-Asp-tRNA(Asn) or phospho-Glu-tRNA(Gln). In Streptomyces avermitilis (strain ATCC 31267 / DSM 46492 / JCM 5070 / NBRC 14893 / NCIMB 12804 / NRRL 8165 / MA-4680), this protein is Aspartyl/glutamyl-tRNA(Asn/Gln) amidotransferase subunit C.